Consider the following 181-residue polypeptide: uncharacterized protein (181 aa).

This is an uncharacterized protein from Acanthamoeba polyphaga (Amoeba).